Here is a 373-residue protein sequence, read N- to C-terminus: MKIRILCMFICTLLLSGCWDSENIEELSLVIGIGLDKPDDENLELTQQILVPKIISAKEGSSSDPTQLSITKGKTVHQMMRTSALKHKPTFSQHLRLILLSKSVIADQIGMDAIINQFVRDNGTRRSSYVFITNGRTKDIFNMNDEGEPASNVIYDLTENNKVTIRTMEPVTLGEISEHLTSDDSFLIPHVGKENGKLAINGASIIKNKLWHRDLTPIEVQNISLFSGTVEGGVIDLKRDGHLFSYEVYSSNRKIKTAYKDGKFKFTVTRNIEGRLSEDWNPNEDSFKDSYIKSIEKTVEKRVHETVTSFITEKLQKEIKADVTGLGNEVRIHYPQKWKKISRKWDDDYFSNAEIDYRVNVIVRDFGTKGANK.

The N-terminal stretch at 1-17 is a signal peptide; the sequence is MKIRILCMFICTLLLSG. The N-palmitoyl cysteine moiety is linked to residue cysteine 18. Cysteine 18 carries the S-diacylglycerol cysteine lipid modification.

The protein belongs to the GerABKC lipoprotein family.

The protein resides in the cell membrane. In terms of biological role, forms a complex at the inner spore membrane which acts as a receptor for L-alanine, thus is involved in the stimulation of germination in response to alanine. Can stimulate germination in the absence of GerD and GerK gene products (fructose and glucose receptors, respectively), but the response is improved in their presence. The sequence is that of Spore germination protein A3 (gerAC) from Bacillus subtilis (strain 168).